A 27-amino-acid chain; its full sequence is Protein YqfI (27 aa).

The protein is Protein YqfI of Escherichia coli (strain K12).